Here is a 122-residue protein sequence, read N- to C-terminus: Holo-[acyl-carrier-protein] synthase (122 aa).

D8 and E58 together coordinate Mg(2+).

It belongs to the P-Pant transferase superfamily. AcpS family. It depends on Mg(2+) as a cofactor.

Its subcellular location is the cytoplasm. It catalyses the reaction apo-[ACP] + CoA = holo-[ACP] + adenosine 3',5'-bisphosphate + H(+). Functionally, transfers the 4'-phosphopantetheine moiety from coenzyme A to a Ser of acyl-carrier-protein. This is Holo-[acyl-carrier-protein] synthase from Levilactobacillus brevis (strain ATCC 367 / BCRC 12310 / CIP 105137 / JCM 1170 / LMG 11437 / NCIMB 947 / NCTC 947) (Lactobacillus brevis).